A 189-amino-acid chain; its full sequence is Photosystem I assembly protein Ycf4 (189 aa).

2 consecutive transmembrane segments (helical) span residues 31-51 and 70-90; these read TVIL…YFGF and VMSF…LTII.

Belongs to the Ycf4 family.

Its subcellular location is the plastid. It is found in the chloroplast thylakoid membrane. Functionally, seems to be required for the assembly of the photosystem I complex. The polypeptide is Photosystem I assembly protein Ycf4 (Chlorokybus atmophyticus (Soil alga)).